A 552-amino-acid chain; its full sequence is Leiomodin-2 (552 aa).

The interaction with tropomyosin alpha stretch occupies residues 1–47; the sequence is MSTFGYRRELSKYEDIDEDELLASLTEEELKELERELEDIEPDRNLP. Interaction with actin regions lie at residues 1–169 and 170–498; these read MSTF…SSHV and RHKK…KEIK. Residues 13–46 are a coiled coil; the sequence is YEDIDEDELLASLTEEELKELERELEDIEPDRNL. Disordered stretches follow at residues 33–67, 87–191, and 364–531; these read LERE…FSRE, GACE…DGKD, and MDKQ…DNLM. Polar residues predominate over residues 51 to 64; the sequence is RQKSLTEKTPTGTF. A coiled-coil region spans residues 86–151; sequence LGACEKDSEQ…DDEDEEKQNS (66 aa). Acidic residues-rich tracts occupy residues 93 to 108 and 115 to 147; these read SEQE…EECF and VSEE…EDEE. A compositionally biased stretch (basic and acidic residues) spans 364–377; that stretch reads MDKQRQKRMQEQRQ. A compositionally biased stretch (low complexity) spans 398–415; sequence PRSSPYTSPKSSPWSSPK. Residues 425 to 450 show a composition bias toward pro residues; it reads SQPPAPAPPPPPPPPPPPPPPPPPVI. A compositionally biased stretch (basic residues) spans 478 to 488; the sequence is QKKKKGKKGKK. Over residues 489 to 513 the composition is skewed to basic and acidic residues; sequence HENSILKEIKDSLKSVSDRKSEEGS. Positions 514-524 are enriched in polar residues; it reads RPSTRPSTPQR. The interaction with actin 3 stretch occupies residues 526 to 545; the sequence is LHDNLMEAIRASSIKQLRRV. Positions 526 to 545 constitute a WH2 domain; that stretch reads LHDNLMEAIRASSIKQLRRV.

It belongs to the tropomodulin family. Can bind at least three actin monomers and thereby provides a nucleus for actin filament formation. Interacts (via N-terminus) with tropomyosin alpha (TPM1) (via N-terminus). May also interact with TPM2 (via N-terminus).

The protein localises to the cytoplasm. Its subcellular location is the myofibril. The protein resides in the sarcomere. It is found in the m line. It localises to the cytoskeleton. In terms of biological role, mediates nucleation of actin filaments and thereby promotes actin polymerization. Plays a role in the regulation of actin filament length. Required for normal sarcomere organization in the heart, and for normal heart function. This Gallus gallus (Chicken) protein is Leiomodin-2 (LMOD2).